The following is a 72-amino-acid chain: Disintegrin sasaimin (72 aa).

The Disintegrin domain occupies 1 to 72 (EAGEECDCGA…SAGCPRNPFH (72 aa)). Cystine bridges form between C6/C21, C8/C16, C15/C38, C29/C35, C34/C59, and C47/C66. The Cell attachment site signature appears at 51-53 (RGD).

Belongs to the venom metalloproteinase (M12B) family. P-II subfamily. P-IIa sub-subfamily. In terms of assembly, monomer. As to expression, expressed by the venom gland.

It localises to the secreted. Inhibits ADP- (IC(50)=66 nM) and collagen-induced (IC(50)=100 nM) aggregation of human platelets. In vitro, inhibits adhesion of endothelial cells to vitronectin, type-I collagen and, to a lower degree, fibronectin and laminin. This chain is Disintegrin sasaimin, found in Cerrophidion sasai (Costa Rica montane pitviper).